An 892-amino-acid chain; its full sequence is DNA mismatch repair protein MutS (892 aa).

634 to 641 (GPNMGGKS) is a binding site for ATP.

Belongs to the DNA mismatch repair MutS family.

Functionally, this protein is involved in the repair of mismatches in DNA. It is possible that it carries out the mismatch recognition step. This protein has a weak ATPase activity. In Paraburkholderia phymatum (strain DSM 17167 / CIP 108236 / LMG 21445 / STM815) (Burkholderia phymatum), this protein is DNA mismatch repair protein MutS.